The following is a 159-amino-acid chain: 2-C-methyl-D-erythritol 2,4-cyclodiphosphate synthase (159 aa).

A divalent metal cation-binding residues include aspartate 8 and histidine 10. 4-CDP-2-C-methyl-D-erythritol 2-phosphate-binding positions include 8–10 and 34–35; these read DVH and HS. Histidine 42 is an a divalent metal cation binding site. 4-CDP-2-C-methyl-D-erythritol 2-phosphate-binding positions include 56-58, 132-135, and arginine 142; these read DIG and TTTE.

Belongs to the IspF family. Homotrimer. It depends on a divalent metal cation as a cofactor.

It carries out the reaction 4-CDP-2-C-methyl-D-erythritol 2-phosphate = 2-C-methyl-D-erythritol 2,4-cyclic diphosphate + CMP. Its pathway is isoprenoid biosynthesis; isopentenyl diphosphate biosynthesis via DXP pathway; isopentenyl diphosphate from 1-deoxy-D-xylulose 5-phosphate: step 4/6. Its function is as follows. Involved in the biosynthesis of isopentenyl diphosphate (IPP) and dimethylallyl diphosphate (DMAPP), two major building blocks of isoprenoid compounds. Catalyzes the conversion of 4-diphosphocytidyl-2-C-methyl-D-erythritol 2-phosphate (CDP-ME2P) to 2-C-methyl-D-erythritol 2,4-cyclodiphosphate (ME-CPP) with a corresponding release of cytidine 5-monophosphate (CMP). This chain is 2-C-methyl-D-erythritol 2,4-cyclodiphosphate synthase, found in Chlorobium phaeobacteroides (strain BS1).